Reading from the N-terminus, the 151-residue chain is D-aminoacyl-tRNA deacylase (151 aa).

The Gly-cisPro motif, important for rejection of L-amino acids motif lies at 137–138 (GP).

This sequence belongs to the DTD family. As to quaternary structure, homodimer.

It is found in the cytoplasm. It catalyses the reaction glycyl-tRNA(Ala) + H2O = tRNA(Ala) + glycine + H(+). The enzyme catalyses a D-aminoacyl-tRNA + H2O = a tRNA + a D-alpha-amino acid + H(+). In terms of biological role, an aminoacyl-tRNA editing enzyme that deacylates mischarged D-aminoacyl-tRNAs. Also deacylates mischarged glycyl-tRNA(Ala), protecting cells against glycine mischarging by AlaRS. Acts via tRNA-based rather than protein-based catalysis; rejects L-amino acids rather than detecting D-amino acids in the active site. By recycling D-aminoacyl-tRNA to D-amino acids and free tRNA molecules, this enzyme counteracts the toxicity associated with the formation of D-aminoacyl-tRNA entities in vivo and helps enforce protein L-homochirality. The protein is D-aminoacyl-tRNA deacylase of Protochlamydia amoebophila (strain UWE25).